The chain runs to 207 residues: Large ribosomal subunit protein uL4 (207 aa).

The segment at 59–78 (GSGKKPFKQKGTGQARQGCK) is disordered.

It belongs to the universal ribosomal protein uL4 family. As to quaternary structure, part of the 50S ribosomal subunit.

Functionally, one of the primary rRNA binding proteins, this protein initially binds near the 5'-end of the 23S rRNA. It is important during the early stages of 50S assembly. It makes multiple contacts with different domains of the 23S rRNA in the assembled 50S subunit and ribosome. Forms part of the polypeptide exit tunnel. The sequence is that of Large ribosomal subunit protein uL4 from Geotalea daltonii (strain DSM 22248 / JCM 15807 / FRC-32) (Geobacter daltonii).